Here is a 500-residue protein sequence, read N- to C-terminus: Glucokinase-1 (500 aa).

Ser2 bears the N-acetylserine mark. Ser2 carries the phosphoserine modification. The Hexokinase domain occupies 12-498 (RAVIQAVDQI…SGVGAALCAL (487 aa)). A hexokinase small subdomain region spans residues 74–216 (NGTERGVLLA…MPMIKVVALT (143 aa)). Lys110 contacts ATP. A glucose-binding region spans residues 158–184 (KLGFTFSYPVDQTSLNSGTLIRWTKGF). The hexokinase large subdomain stretch occupies residues 217–487 (NDTVGTYLSH…RKVHLKIAKD (271 aa)). Ser470 bears the Phosphoserine mark. 487 to 492 (DGSGVG) contributes to the ATP binding site.

Belongs to the hexokinase family. As to quaternary structure, monomer.

It catalyses the reaction D-glucose + ATP = D-glucose 6-phosphate + ADP + H(+). It participates in carbohydrate metabolism; hexose metabolism. The protein operates within carbohydrate degradation; glycolysis; D-glyceraldehyde 3-phosphate and glycerone phosphate from D-glucose: step 1/4. Functionally, two isoenzymes, hexokinase-1 and hexokinase-2, can phosphorylate keto- and aldohexoses in yeast, whereas a third isoenzyme, GLK, is specific for aldohexoses. All glucose phosphorylating enzymes are involved in glucose uptake. This is Glucokinase-1 (GLK1) from Saccharomyces cerevisiae (strain ATCC 204508 / S288c) (Baker's yeast).